A 283-amino-acid chain; its full sequence is Putative Ig-like domain-containing protein ORF10 (283 aa).

The N-terminal stretch at 1–55 (MIDKRNKKAVTHISTCLCHSSIPIYGDSPFLNTHRAAMDPRPLVLLLLLASHIST) is a signal peptide. N-linked (GlcNAc...) asparagine; by host glycosylation is found at Asn-75, Asn-92, Asn-121, Asn-157, Asn-179, Asn-198, Asn-223, and Asn-229. The Ig-like domain occupies 129–227 (QPLGQSIHHA…IDQQTNLTLT (99 aa)).

This is Putative Ig-like domain-containing protein ORF10 from Galliformes (FAdV-1).